A 193-amino-acid polypeptide reads, in one-letter code: Crossover junction endodeoxyribonuclease RuvC (193 aa).

Active-site residues include Asp7, Glu68, and Asp141. Residues Asp7, Glu68, and Asp141 each coordinate Mg(2+).

It belongs to the RuvC family. In terms of assembly, homodimer which binds Holliday junction (HJ) DNA. The HJ becomes 2-fold symmetrical on binding to RuvC with unstacked arms; it has a different conformation from HJ DNA in complex with RuvA. In the full resolvosome a probable DNA-RuvA(4)-RuvB(12)-RuvC(2) complex forms which resolves the HJ. It depends on Mg(2+) as a cofactor.

The protein localises to the cytoplasm. The enzyme catalyses Endonucleolytic cleavage at a junction such as a reciprocal single-stranded crossover between two homologous DNA duplexes (Holliday junction).. Functionally, the RuvA-RuvB-RuvC complex processes Holliday junction (HJ) DNA during genetic recombination and DNA repair. Endonuclease that resolves HJ intermediates. Cleaves cruciform DNA by making single-stranded nicks across the HJ at symmetrical positions within the homologous arms, yielding a 5'-phosphate and a 3'-hydroxyl group; requires a central core of homology in the junction. The consensus cleavage sequence is 5'-(A/T)TT(C/G)-3'. Cleavage occurs on the 3'-side of the TT dinucleotide at the point of strand exchange. HJ branch migration catalyzed by RuvA-RuvB allows RuvC to scan DNA until it finds its consensus sequence, where it cleaves and resolves the cruciform DNA. In Bifidobacterium adolescentis (strain ATCC 15703 / DSM 20083 / NCTC 11814 / E194a), this protein is Crossover junction endodeoxyribonuclease RuvC.